Here is a 98-residue protein sequence, read N- to C-terminus: MANFVLNAQARAEDKQGKGASRRLRRESLVPAIIYGGNAEPVAVTLELRELVKALESNVFFEEVVEIKVGDKVENVKIQALQRHPAKNTPMHADFKRA.

A disordered region spans residues 1–23; it reads MANFVLNAQARAEDKQGKGASRR.

The protein belongs to the bacterial ribosomal protein bL25 family. In terms of assembly, part of the 50S ribosomal subunit; part of the 5S rRNA/L5/L18/L25 subcomplex. Contacts the 5S rRNA. Binds to the 5S rRNA independently of L5 and L18.

In terms of biological role, this is one of the proteins that binds to the 5S RNA in the ribosome where it forms part of the central protuberance. The chain is Large ribosomal subunit protein bL25 from Acinetobacter baumannii (strain AB307-0294).